We begin with the raw amino-acid sequence, 330 residues long: B-cell receptor CD22 (330 aa).

Positions 1–17 (MHLLGPWLLLLEYLAFS) are cleaved as a signal peptide. In terms of domain architecture, Ig-like V-type spans 18–136 (DSSKWAFEHP…MERIHLNVSE (119 aa)). Residues 18-330 (DSSKWAFEHP…VFLQVQYAPE (313 aa)) lie on the Extracellular side of the membrane. 3 disulfides stabilise this stretch: Cys37/Cys165, Cys42/Cys100, and Cys159/Cys217. 3 N-linked (GlcNAc...) asparagine glycosylation sites follow: Asn65, Asn99, and Asn110. Residue Arg118 coordinates N-acetylneuraminate. Residues Asn133, Asn162, Asn187, and Asn229 are each glycosylated (N-linked (GlcNAc...) asparagine). 2 Ig-like C2-type domains span residues 141–233 (PHIQ…DTVQ) and 240–324 (PKLK…VFLQ). Cys263 and Cys307 are joined by a disulfide.

It belongs to the immunoglobulin superfamily. SIGLEC (sialic acid binding Ig-like lectin) family. In terms of assembly, predominantly monomer of isoform CD22-beta. Also found as heterodimer of isoform CD22-beta and a shorter isoform. Interacts with PTPN6/SHP-1, LYN, SYK, PIK3R1/PIK3R2 and PLCG1 upon phosphorylation. Interacts with GRB2, INPP5D and SHC1 upon phosphorylation. May form a complex with INPP5D/SHIP, GRB2 and SHC1.

The protein resides in the cell membrane. Most highly expressed siglec (sialic acid-binding immunoglobulin-like lectin) on B-cells that plays a role in various aspects of B-cell biology including differentiation, antigen presentation, and trafficking to bone marrow. Binds to alpha 2,6-linked sialic acid residues of surface molecules such as CD22 itself, CD45 and IgM in a cis configuration. Can also bind to ligands on other cells as an adhesion molecule in a trans configuration. Acts as an inhibitory coreceptor on the surface of B-cells and inhibits B-cell receptor induced signaling, characterized by inhibition of the calcium mobilization and cellular activation. Mechanistically, the immunoreceptor tyrosine-based inhibitory motif domain is phosphorylated by the Src kinase LYN, which in turn leads to the recruitment of the protein tyrosine phosphatase 1/PTPN6, leading to the negative regulation of BCR signaling. If this negative signaling from is of sufficient strength, apoptosis of the B-cell can be induced. The polypeptide is B-cell receptor CD22 (Pongo pygmaeus (Bornean orangutan)).